The primary structure comprises 240 residues: Ribonuclease P protein component 3 (240 aa).

It belongs to the eukaryotic/archaeal RNase P protein component 3 family. In terms of assembly, consists of a catalytic RNA component and at least 4-5 protein subunits.

It is found in the cytoplasm. The catalysed reaction is Endonucleolytic cleavage of RNA, removing 5'-extranucleotides from tRNA precursor.. Its function is as follows. Part of ribonuclease P, a protein complex that generates mature tRNA molecules by cleaving their 5'-ends. The protein is Ribonuclease P protein component 3 of Halorubrum lacusprofundi (strain ATCC 49239 / DSM 5036 / JCM 8891 / ACAM 34).